A 178-amino-acid polypeptide reads, in one-letter code: Probable host range protein 2 (178 aa).

It belongs to the poxviridae C7 protein family.

In terms of biological role, plays a role for multiplication of the virus in different cell types. The chain is Probable host range protein 2 from Yaba-like disease virus (YLDV).